Here is a 311-residue protein sequence, read N- to C-terminus: m7GpppX diphosphatase (311 aa).

Substrate is bound by residues glutamate 159, lysine 181, and 242–253; that span reads HYQPSFYHLHVH. The Histidine triad motif motif lies at 249–253; that stretch reads HLHVH. The active-site Nucleophile is the histidine 251.

The protein belongs to the HIT family. In terms of tissue distribution, expressed in neurons in the ventral cord, the nerve ring and the pharynx.

The protein resides in the nucleus. It carries out the reaction a 5'-end (N(7)-methyl 5'-triphosphoguanosine)-ribonucleoside in mRNA + H2O = N(7)-methyl-GMP + a 5'-end diphospho-ribonucleoside in mRNA + 2 H(+). The catalysed reaction is a 5'-end (N(2),N(2),N(7)-trimethyl 5'-triphosphoguanosine)-ribonucleoside in mRNA + H2O = (N(2),N(2),N(7))-trimethyl-GMP + a 5'-end diphospho-ribonucleoside in mRNA + 2 H(+). Its activity is regulated as follows. The hydrolytic product 7-methylguanosine diphosphate (m7GDP) efficiently inhibits the decapping scavenger activity and acts as a competitive inhibitor in vitro. Functionally, decapping scavenger enzyme that catalyzes the cleavage of a residual cap structure following the degradation of mRNAs of the 3'-&gt;5' exosome-mediated mRNA decay pathway. Hydrolyzes cap analog structures like 7-methylguanosine nucleoside triphosphate (m7GpppG) and tri-methyl guanosine nucleoside triphosphate (m3(2,2,7)GpppG) with up to 2 nucleotide substrates (small capped oligoribonucleotides) and specifically releases 5'-phosphorylated RNA fragments and 7-methylguanosine monophosphate (m7GMP). Does not hydrolyze unmethylated cap analog (GpppG) and shows no decapping activity on intact m7GpppG-capped mRNA molecules. Does not hydrolyze 7-methylguanosine diphosphate (m7GDP) and tri-methylguanosine diphosphate (m3(2,2,7)GDP) to m(7)GMP and m3(2,2,7)GMP, respectively. May also play a role in the 5'-&gt;3 mRNA decay pathway; m7GDP, the downstream product released by the 5'-&gt;3' mRNA mediated decapping activity, may be also converted by dcs-1 to m7GMP. Binds to m7GpppG and strongly to m7GDP. The chain is m7GpppX diphosphatase (dcs-1) from Caenorhabditis elegans.